Here is a 113-residue protein sequence, read N- to C-terminus: TYRO protein tyrosine kinase-binding protein (113 aa).

The N-terminal stretch at 1 to 27 (MGGLEPCSRLLLLPLLLAVGGLRPVQA) is a signal peptide. The Extracellular segment spans residues 28 to 40 (QAQSDCSCSTVSP). The chain crosses the membrane as a helical span at residues 41–61 (GVLAGIVLGDLVLTVLIALAV). Ca(2+) is bound at residue D50. The Cytoplasmic portion of the chain corresponds to 62–113 (YFLGRLVPRGRGAAEAATRKQRITETESPYQELQGQRSDVYSDLNTQRPYYK). The segment at 75–113 (AEAATRKQRITETESPYQELQGQRSDVYSDLNTQRPYYK) is disordered. Residues 80 to 108 (RKQRITETESPYQELQGQRSDVYSDLNTQ) enclose the ITAM domain. Over residues 87–113 (TESPYQELQGQRSDVYSDLNTQRPYYK) the composition is skewed to polar residues. 2 positions are modified to phosphotyrosine: Y91 and Y102.

This sequence belongs to the TYROBP family. As to quaternary structure, homodimer; disulfide-linked. Homotrimer; disulfide-linked. Homotetramer; disulfide-linked. Homotrimers and homotetramers form when low levels of partner receptors are available and is competitive with assembly with interacting receptors. They may represent alternative oligomerization states or may be intermediates in the receptor assembly process. Binding of a metal cation aids in homooligomerization through coordination of the metal ion by the subunits of the oligomer. Interacts with TREM1. Interacts with TREM2. Interacts with CLECSF5. Interacts with CD300LB and CD300C2. Interacts with CD300E. Interacts (via ITAM domain) with SYK (via SH2 domains); activates SYK mediating neutrophils and macrophages integrin-mediated activation. Interacts with KLRC2. Interacts with CD300H. Interacts with KLRD1. In terms of processing, following ligand binding by associated receptors, tyrosine phosphorylated in the ITAM domain which leads to activation of additional tyrosine kinases and subsequent cell activation.

It localises to the cell membrane. Adapter protein which non-covalently associates with activating receptors found on the surface of a variety of immune cells to mediate signaling and cell activation following ligand binding by the receptors. TYROBP is tyrosine-phosphorylated in the ITAM domain following ligand binding by the associated receptors which leads to activation of additional tyrosine kinases and subsequent cell activation. Also has an inhibitory role in some cells. Non-covalently associates with activating receptors of the CD300 family to mediate cell activation. Also mediates cell activation through association with activating receptors of the CD200R family. Required for neutrophil activation mediated by integrin. Required for the activation of myeloid cells mediated by the CLEC5A/MDL1 receptor. Associates with natural killer (NK) cell receptors such as the KLRD1/KLRC2 heterodimer to mediate NK cell activation. Associates with TREM1 to mediate activation of neutrophils and monocytes. Associates with TREM2 on monocyte-derived dendritic cells to mediate up-regulation of chemokine receptor CCR7 and dendritic cell maturation and survival. Association with TREM2 mediates cytokine-induced formation of multinucleated giant cells which are formed by the fusion of macrophages. Stabilizes the TREM2 C-terminal fragment (TREM2-CTF) produced by TREM2 ectodomain shedding which suppresses the release of pro-inflammatory cytokines. In microglia, required with TREM2 for phagocytosis of apoptotic neurons. Required with ITGAM/CD11B in microglia to control production of microglial superoxide ions which promote the neuronal apoptosis that occurs during brain development. Promotes pro-inflammatory responses in microglia following nerve injury which accelerates degeneration of injured neurons. Positively regulates the expression of the IRAK3/IRAK-M kinase and IL10 production by liver dendritic cells and inhibits their T cell allosimulatory ability. Negatively regulates B cell proliferation. Required for CSF1-mediated osteoclast cytoskeletal organization. Positively regulates multinucleation during osteoclast development. This is TYRO protein tyrosine kinase-binding protein from Macaca mulatta (Rhesus macaque).